A 271-amino-acid polypeptide reads, in one-letter code: 3-methyl-2-oxobutanoate hydroxymethyltransferase (271 aa).

Mg(2+) contacts are provided by Asp51 and Asp90. Residues 51–52 (DS), Asp90, and Lys118 each bind 3-methyl-2-oxobutanoate. Mg(2+) is bound at residue Glu120. Glu186 functions as the Proton acceptor in the catalytic mechanism.

It belongs to the PanB family. Homodecamer; pentamer of dimers. Requires Mg(2+) as cofactor.

It localises to the cytoplasm. The catalysed reaction is 3-methyl-2-oxobutanoate + (6R)-5,10-methylene-5,6,7,8-tetrahydrofolate + H2O = 2-dehydropantoate + (6S)-5,6,7,8-tetrahydrofolate. Its pathway is cofactor biosynthesis; (R)-pantothenate biosynthesis; (R)-pantoate from 3-methyl-2-oxobutanoate: step 1/2. Functionally, catalyzes the reversible reaction in which hydroxymethyl group from 5,10-methylenetetrahydrofolate is transferred onto alpha-ketoisovalerate to form ketopantoate. This chain is 3-methyl-2-oxobutanoate hydroxymethyltransferase, found in Xanthomonas axonopodis pv. citri (strain 306).